The sequence spans 397 residues: MNAGSDPVVIVSAARTAIGSFNGALSTVPVHEMGTTVIKEVLQRAKVAPEEVSEVIFGHVLTAGCGQNPTRQASVGAGIPYSVPAWSCQMICGSGLKAVCLAAQSIAMGDSTIVVAGGMENMSKAPHLTHLRTGVRMGEVPLADSILCDGLTDAFHNYHMGITAENVAKKWQVSREAQDKVAVLSQNRAEHAQKAGHFDKEIVPVLVSSRKGLTEVKIDEFPRHGSNLEAMGKLKPYFLTDGTGTVTPANASGMNDGAAAVVLMKKTEAERRMLKPLARIVSWSQAGVEPSVMGVGPIPAIKQAVAKAGWSLEDVDLFEINEAFAAVSAAIAKELGLNPEKVNIDGGAIALGHPLGASGCRILVTLLHTLERVGGTRGVAALCIGGGMGVAMCVQRG.

Met-1 is modified (N-acetylmethionine). The Acyl-thioester intermediate role is filled by Cys-92. At Lys-200 the chain carries N6-acetyllysine. CoA contacts are provided by Arg-223 and Ser-226. N6-acetyllysine is present on residues Lys-233 and Lys-235. Ser-252 is a binding site for CoA. Catalysis depends on Cys-383, which acts as the Proton donor/acceptor.

The protein belongs to the thiolase-like superfamily. Thiolase family. In terms of assembly, homotetramer.

It localises to the cytoplasm. It is found in the cytosol. It carries out the reaction 2 acetyl-CoA = acetoacetyl-CoA + CoA. It participates in lipid metabolism; fatty acid metabolism. Involved in the biosynthetic pathway of cholesterol. This chain is Acetyl-CoA acetyltransferase, cytosolic (Acat2), found in Mus musculus (Mouse).